Reading from the N-terminus, the 69-residue chain is Protein SlyX homolog (69 aa).

This sequence belongs to the SlyX family.

The polypeptide is Protein SlyX homolog (Pseudomonas paraeruginosa (strain DSM 24068 / PA7) (Pseudomonas aeruginosa (strain PA7))).